Consider the following 597-residue polypeptide: Apurinic-apyrimidinic endonuclease 1 (597 aa).

The span at 232-246 shows a compositional bias: polar residues; that stretch reads YNNDTKYLSNPKGVT. The interval 232–296 is disordered; that stretch reads YNNDTKYLSN…IPPIPKNTED (65 aa). Positions 265 to 274 are enriched in low complexity; the sequence is NNNNNNNNNK. Residues histidine 380, histidine 420, glutamate 456, aspartate 490, histidine 493, histidine 527, aspartate 540, histidine 542, and glutamate 572 each coordinate Zn(2+). Histidine 493 lines the Mn(2+) pocket. Positions 540 and 542 each coordinate Mn(2+).

It belongs to the AP endonuclease 2 family. The cofactor is Zn(2+). Mn(2+) serves as cofactor. May be proteolytically cleaved into a 59 kDa form.

Its subcellular location is the mitochondrion. Its activity is regulated as follows. Apurinic/apyrimidinic (AP) endonuclease activity is enhanced with increasing concentrations of Mn(2+), while Zn(2+) initially enhances activity but subsequently inhibits activity in a concentration-dependent manner. Co(2+) inhibits apurinic/apyrimidinic (AP) endonuclease activity at concentrations greater than 2.5 mM. In terms of biological role, plays a role in mitochondrial DNA base excision repair (BER) pathway induced by oxidative stress. Has apurinic/apyrimidinic (AP) endonuclease activity towards double-stranded DNA (dsDNA) with a preference for C as opposite base. Has 3'-phosphatase activity; removes 3'-phosphate from blunt-end, recessed, and gapped DNA templates and thus, removes 3'-blocks for DNA polymerase activity during BER. Lacks 3'-5' exonuclease activity and does not cleave damaged bases by nucleotide incision repair (NIR). The polypeptide is Apurinic-apyrimidinic endonuclease 1 (Plasmodium falciparum (isolate 3D7)).